Consider the following 174-residue polypeptide: Flavodoxin 1 (174 aa).

One can recognise a Flavodoxin-like domain in the interval 4-168; sequence IGIFYGSSSG…RLERWIAVLQ (165 aa). Residues 10 to 14 and 89 to 122 each bind FMN; these read SSSGV and LFGAGDYVSHGEQFVSALGVLYDKFKARGAALVG.

FMN is required as a cofactor.

Functionally, flavodoxins are low-potential electron donors to a number of redox enzymes. AvFld 1 is able to donate electrons to the assimilatory nitrate reductase of A.vinelandii to catalyze the reduction of nitrate to nitrite. This Azotobacter vinelandii (strain DJ / ATCC BAA-1303) protein is Flavodoxin 1.